The primary structure comprises 317 residues: Transaldolase (317 aa).

The active-site Schiff-base intermediate with substrate is the lysine 132.

Belongs to the transaldolase family. Type 1 subfamily. In terms of assembly, homodimer.

The protein resides in the cytoplasm. It carries out the reaction D-sedoheptulose 7-phosphate + D-glyceraldehyde 3-phosphate = D-erythrose 4-phosphate + beta-D-fructose 6-phosphate. It functions in the pathway carbohydrate degradation; pentose phosphate pathway; D-glyceraldehyde 3-phosphate and beta-D-fructose 6-phosphate from D-ribose 5-phosphate and D-xylulose 5-phosphate (non-oxidative stage): step 2/3. Its function is as follows. Transaldolase is important for the balance of metabolites in the pentose-phosphate pathway. In Pseudoalteromonas atlantica (strain T6c / ATCC BAA-1087), this protein is Transaldolase.